The chain runs to 312 residues: Ribosomal RNA small subunit methyltransferase H (312 aa).

S-adenosyl-L-methionine-binding positions include 34–36 (AGH), Asp-54, Phe-81, Asp-102, and Gln-109.

This sequence belongs to the methyltransferase superfamily. RsmH family.

The protein localises to the cytoplasm. The catalysed reaction is cytidine(1402) in 16S rRNA + S-adenosyl-L-methionine = N(4)-methylcytidine(1402) in 16S rRNA + S-adenosyl-L-homocysteine + H(+). Specifically methylates the N4 position of cytidine in position 1402 (C1402) of 16S rRNA. The protein is Ribosomal RNA small subunit methyltransferase H of Citrifermentans bemidjiense (strain ATCC BAA-1014 / DSM 16622 / JCM 12645 / Bem) (Geobacter bemidjiensis).